A 506-amino-acid chain; its full sequence is MKPLSIKAEEISALIKQQLEKYDDKLNVNEVGTVTYVGDGIARAHGLNNVLSSELLQFSNGSYGIAQNLEANDVGIIILGRFDDIREGDQVKRTGRIMEVPVGDQLIGRVVNPLGQPVDGLGEIKTDKTRPIESKAPGVMDRQSVNQPLQTGIKAIDALVPIGRGQRELIIGDRKTGKTALALDTIINQKGQDVICIYVAIGQKESTVKNSVETLKRFGAMDYTIVVEAGPSEPAPMLYIAPYAGTAMGEEFMYNGKDVLIVFDDLSKQAVAYREISLLLRRPPGREAYPGDVFYLHSRLLERSAKLNKKLGGGSMTALPFIQTQAGDISAYIPTNVISITDGQIFLEADLFFAGTRPAINAGESVSRVGGSAQIKAMKKVAGTLRVDLASYRELESFAQFGSDLDQATQAKLNRGRRTVEVLKQPLHKPLPVEDEVLILYALTHGFLDAIPVPDIQRYELELYDYFASNYNDLLDVIRTTGDLPEEAKLNEALKNFNEGFSISKK.

172–179 (GDRKTGKT) contacts ATP.

The protein belongs to the ATPase alpha/beta chains family. As to quaternary structure, F-type ATPases have 2 components, CF(1) - the catalytic core - and CF(0) - the membrane proton channel. CF(1) has five subunits: alpha(3), beta(3), gamma(1), delta(1), epsilon(1). CF(0) has three main subunits: a(1), b(2) and c(9-12). The alpha and beta chains form an alternating ring which encloses part of the gamma chain. CF(1) is attached to CF(0) by a central stalk formed by the gamma and epsilon chains, while a peripheral stalk is formed by the delta and b chains.

It localises to the cell membrane. It carries out the reaction ATP + H2O + 4 H(+)(in) = ADP + phosphate + 5 H(+)(out). Its function is as follows. Produces ATP from ADP in the presence of a proton gradient across the membrane. The alpha chain is a regulatory subunit. The protein is ATP synthase subunit alpha of Lactobacillus gasseri (strain ATCC 33323 / DSM 20243 / BCRC 14619 / CIP 102991 / JCM 1131 / KCTC 3163 / NCIMB 11718 / NCTC 13722 / AM63).